The primary structure comprises 797 residues: MKLLLYLFGVTFHSNTVVALELRECSHQLGMSNRKIRDEQISASSSFDLQSTGPQHARAHQESGSGAWCPKNQINSLSKEWLQISFSVDTVITSVETQGRFDDGRGMEYATAFKIQYWRPSLNAWASYKDDFELETIPANNDTEHAIRRHLDRAIIARRIRIVPVSNSTRTVCMRVEVFGCPFDDSLVFYNVDQGDLQSGISYHDFSYDGNLANSPHLTGGIGKLYDGEVGKNNVFVNHHKWVGWRRKRNGNVKLAFEFSELRNISGILIHTSNEFKKSAKAFSSATVLFSINGKDFSDTIVHFNNPEDTESEVPRWIRIPVNNRIAKVAKIRLNFGTDSDWLFISEVNFESNHTNIELLNDDVVIPDSVSYFSVTEHDDGTSMFAFIIFFFMFLIVAVIILTVLYRKREYRVKASSPSPNAKREILLTIDGNTIKHHVSPSTYQMARDNLQNALIEKMPMSPIISDYAEPDISVCSDVTANTPLLYGIDGPYDTQKRSNPLSSMVKYSDYGEVYCTTLPEIARDKLICVSRIGQGEFGEVDLCQLENRKVAVKKLHGISQADEFSFHREIRVLGSLKHPNVVEVVGVCTIQKPILCIMEYMENGDLKSYILKNPTIQTSQCISICTQLAAGLAYLESCNFVHRDIAARNCLVDGEGNVKIADFGMARSLYSQEYYKVEGKFVLPIRWMAWEALLLGKFSTASDVWGFGVTMWEIFSLCSEKPYSDMTDDDVVENLQSMSSTGSLKQVLSRPRMCPSKLYNEQILPCWNYESSRRPSFENVHLHLQSLVHTSPHIHF.

A signal peptide spans 1–19; it reads MKLLLYLFGVTFHSNTVVA. The Extracellular portion of the chain corresponds to 20–384; the sequence is LELRECSHQL…VTEHDDGTSM (365 aa). The 157-residue stretch at 25–181 folds into the F5/8 type C domain; the sequence is CSHQLGMSNR…VCMRVEVFGC (157 aa). A disulfide bond links Cys25 and Cys181. The disordered stretch occupies residues 46 to 66; it reads SFDLQSTGPQHARAHQESGSG. Residues Asn141, Asn167, Asn264, and Asn353 are each glycosylated (N-linked (GlcNAc...) asparagine). Residues 385–405 traverse the membrane as a helical segment; sequence FAFIIFFFMFLIVAVIILTVL. The Cytoplasmic portion of the chain corresponds to 406-797; it reads YRKREYRVKA…LVHTSPHIHF (392 aa). The 259-residue stretch at 527–785 folds into the Protein kinase domain; the sequence is LICVSRIGQG…PSFENVHLHL (259 aa). ATP contacts are provided by residues 533–541 and Lys554; that span reads IGQGEFGEV. Asp645 acts as the Proton acceptor in catalysis.

Belongs to the protein kinase superfamily. Tyr protein kinase family. Insulin receptor subfamily. Interacts with shc-1. In terms of processing, autophosphorylated on tyrosine residues. Post-translationally, N-glycosylation at Asn-141 is required for axon regeneration after injury but is dispensable for kinase activity and axon localization. As to expression, expressed in some neurons in head and tail, some motoneurons in ventral nerve cord, in PVP interneurons, seam cells, rectal gland cells, vulva cells and some non-neuronal cells in the tail. Expressed in D-type motor neurons.

It localises to the cell membrane. It is found in the cell projection. Its subcellular location is the axon. The protein localises to the perikaryon. It catalyses the reaction L-tyrosyl-[protein] + ATP = O-phospho-L-tyrosyl-[protein] + ADP + H(+). In terms of biological role, tyrosine-protein kinase receptor which, together with ddr-1, is involved in axon guidance to establish the tracts for the ventral and dorsal nerve cords during nervous system development. Acts upstream of the adapter shc-1, and the tyrosine kinase receptors svh-1 and svh-2 to regulate axon regeneration following injury in D-type motor neurons. May mediate axon regeneration in association with the collagen emb-9. The protein is Discoidin domain-containing receptor tyrosine kinase B of Caenorhabditis elegans.